A 316-amino-acid chain; its full sequence is MTNEFHHVTVLLHEAVDMLDIKPDGIYVDATLGGSGHSAYLLSLLGDKGHLYCFDQDQKAIDHAQEQLKPYIDKGQVTFIKDNFRHLKARLLEHGVTEIDGILYDLGVSSPQLDERERGFSYKQDAPLDMRMDSQAALTAYEVVNTYDFNDLVRIFFKYGEDKFSKQIARKIEQARAIKPISTTTELAALIKSAKPAKELKKKGHPAKQIFQAIRIEVNDELGAADASIQQAIELLALDGRISVITFHSLEDRLTKHLFKEASTADAPKGLPFIPDELKPKLELVSRKPILPSQKELMANNRAHSAKLRVARKVRK.

S-adenosyl-L-methionine contacts are provided by residues 35–37 (SGH), D55, F84, D105, and Q112.

The protein belongs to the methyltransferase superfamily. RsmH family.

The protein localises to the cytoplasm. It carries out the reaction cytidine(1402) in 16S rRNA + S-adenosyl-L-methionine = N(4)-methylcytidine(1402) in 16S rRNA + S-adenosyl-L-homocysteine + H(+). In terms of biological role, specifically methylates the N4 position of cytidine in position 1402 (C1402) of 16S rRNA. This chain is Ribosomal RNA small subunit methyltransferase H, found in Streptococcus equi subsp. zooepidemicus (strain MGCS10565).